Here is a 935-residue protein sequence, read N- to C-terminus: UvrABC system protein A (935 aa).

An ATP-binding site is contributed by 31–38 (GLSGSGKS). The C4-type zinc-finger motif lies at 254–281 (CFKCKMSFEELEPLSFSFNSPKGACESC). 2 consecutive ABC transporter domains span residues 310-579 (IFGY…NNHS) and 599-931 (KEKH…KFLA). 631–638 (GVSGSGKS) contributes to the ATP binding site. Residues 731-757 (CEKCQGDGDIKIEMHFLPDVLVQCDSC) form a C4-type zinc finger.

Belongs to the ABC transporter superfamily. UvrA family. In terms of assembly, forms a heterotetramer with UvrB during the search for lesions.

It is found in the cytoplasm. Functionally, the UvrABC repair system catalyzes the recognition and processing of DNA lesions. UvrA is an ATPase and a DNA-binding protein. A damage recognition complex composed of 2 UvrA and 2 UvrB subunits scans DNA for abnormalities. When the presence of a lesion has been verified by UvrB, the UvrA molecules dissociate. In Helicobacter pylori (strain ATCC 700392 / 26695) (Campylobacter pylori), this protein is UvrABC system protein A.